The chain runs to 186 residues: Casparian strip membrane protein 5 (186 aa).

The Cytoplasmic segment spans residues 1–25 (MKTDAIELGVAKDSTPIGGANRGVS). Residues 26 to 46 (ILDFILRLVALVGTLASAILM) form a helical membrane-spanning segment. At 47–73 (GTTNETLPFATQFIRFRAEYDDLPTFT) the chain is on the extracellular side. An N-linked (GlcNAc...) asparagine glycan is attached at asparagine 50. The helical transmembrane segment at 74–94 (FFVVANIVVSGYLLLSLPLSI) threads the bilayer. Topologically, residues 95-106 (VNIVRSTAKNRR) are cytoplasmic. The chain crosses the membrane as a helical span at residues 107–127 (IILIIFDTAMLALLTAGASAA). The Extracellular portion of the chain corresponds to 128–156 (AAIVYLAHKGNTRANWFAICQQFNSFCER). Residues 157 to 177 (ISGSLIGSFVGVAVFILLILM) traverse the membrane as a helical segment. The Cytoplasmic segment spans residues 178–186 (SASALSRRN).

The protein belongs to the Casparian strip membrane proteins (CASP) family. In terms of assembly, homodimer and heterodimers.

It localises to the cell membrane. In terms of biological role, regulates membrane-cell wall junctions and localized cell wall deposition. Required for establishment of the Casparian strip membrane domain (CSD) and the subsequent formation of Casparian strips, a cell wall modification of the root endodermis that determines an apoplastic barrier between the intraorganismal apoplasm and the extraorganismal apoplasm and prevents lateral diffusion. The chain is Casparian strip membrane protein 5 from Ricinus communis (Castor bean).